We begin with the raw amino-acid sequence, 154 residues long: Cytochrome c-550 (154 aa).

An N-terminal signal peptide occupies residues 1-20 (MKISIYATLAALSLALPAVA). Position 21 is a pyrrolidone carboxylic acid (Q21). C35, C38, H39, and M120 together coordinate heme c. A propeptide spanning residues 150–154 (EGAAN) is cleaved from the precursor.

Binds 1 heme c group covalently per subunit.

This chain is Cytochrome c-550 (cyc), found in Paracoccus versutus (Thiobacillus versutus).